The chain runs to 1214 residues: MERFRLEKKLPGPDEEAVVDLGKTSSTVNTKFEKEELESHRAVYIGVHVPFSKESRRRHRHRGHKHHHRRRKDKESDKEDGRESPSYDTPSQRVQFILGTEDDDEEHIPHDLFTEMDELCYRDGEEYEWKETARWLKFEEDVEDGGDRWSKPYVATLSLHSLFELRSCILNGTVMLDMRASTLDEIADMVLDNMIASGQLDESIRENVREALLKRHHHQNEKRFTSRIPLVRSFADIGKKHSDPHLLERNGEGLSASRHSLRTGLSASNLSLRGESPLSLLLGHLLPSSRAGTPAGSRCTTPVPTPQNSPPSSPSISRLTSRSSQESQRQAPELLVSPASDDIPTVVIHPPEEDLEAALKGEEQKNEENVDLTPGILASPQSAPGNLDNSKSGEIKGNGSGGSRENSTVDFSKVDMNFMRKIPTGAEASNVLVGEVDFLERPIIAFVRLAPAVLLTGLTEVPVPTRFLFLLLGPAGKAPQYHEIGRSIATLMTDEIFHDVAYKAKDRNDLLSGIDEFLDQVTVLPPGEWDPSIRIEPPKSVPSQEKRKIPVFHNGSTPTLGETPKEAAHHAGPELQRTGRLFGGLILDIKRKAPFFLSDFKDALSLQCLASILFLYCACMSPVITFGGLLGEATEGRISAIESLFGASLTGIAYSLFAGQPLTILGSTGPVLVFEKILYKFCRDYQLSYLSLRTSIGLWTSFLCIVLVATDASSLVCYITRFTEEAFAALICIIFIYEALEKLFDLGETYAFNMHNNLDKLTSYSCVCTEPPNPSNETLAQWKKDNITAHNISWRNLTVSECKKLRGVFLGSACGHHGPYIPDVLFWCVILFFTTFFLSSFLKQFKTKRYFPTKVRSTISDFAVFLTIVIMVTIDYLVGVPSPKLHVPEKFEPTHPERGWIISPLGDNPWWTLLIAAIPALLCTILIFMDQQITAVIINRKEHKLKKGAGYHLDLLMVGVMLGVCSVMGLPWFVAATVLSISHVNSLKVESECSAPGEQPKFLGIREQRVTGLMIFILMGLSVFMTSVLKFIPMPVLYGVFLYMGVSSLKGIQLFDRIKLFGMPAKHQPDLIYLRYVPLWKVHIFTVIQLTCLVLLWVIKVSAAAVVFPMMVLALVFVRKLMDLCFTKRELSWLDDLMPESKKKKEDDKKKKEKEEAERMLQDDDDTVHLPFEGGSLLQIPVKALKYSPDKPVSVKISFEDEPRKKYVDAETSL.

A compositionally biased stretch (basic and acidic residues) spans 1–12 (MERFRLEKKLPG). 2 disordered regions span residues 1 to 22 (MERF…VDLG) and 52 to 93 (SKES…PSQR). Over 1 to 608 (MERFRLEKKL…DFKDALSLQC (608 aa)) the chain is Extracellular. A phosphoserine mark is found at Ser-52, Ser-55, Ser-84, Ser-150, Leu-165, and Cys-168. Positions 55–72 (SRRRHRHRGHKHHHRRRK) are enriched in basic residues. Basic and acidic residues predominate over residues 73 to 85 (DKESDKEDGRESP). A glycan (N-linked (GlcNAc...) asparagine) is linked at Asn-171. 8 positions are modified to phosphoserine: Ser-233, Ser-242, Ser-255, Arg-258, Ser-260, Thr-263, Gly-264, and Ala-267. A glycan (N-linked (GlcNAc...) asparagine) is linked at Asn-269. Disordered regions lie at residues 289–346 (SRAG…IPTV), 362–408 (EEQK…ENST), and 552–572 (FHNG…HHAG). The segment covering 303 to 313 (VPTPQNSPPSS) has biased composition (pro residues). Low complexity predominate over residues 314–332 (PSISRLTSRSSQESQRQAP). Over residues 379–392 (SPQSAPGNLDNSKS) the composition is skewed to polar residues. A Phosphoserine modification is found at Ser-382. An N-linked (GlcNAc...) asparagine glycan is attached at Asn-398. A phosphoserine mark is found at Ser-400 and Ser-403. N-linked (GlcNAc...) asparagine glycosylation is present at Asn-406. Phosphoserine occurs at positions 407 and 556. Thr-557 is modified (phosphothreonine). Residues 563–572 (TPKEAAHHAG) show a composition bias toward basic and acidic residues. A helical transmembrane segment spans residues 609–629 (LASILFLYCACMSPVITFGGL). The Cytoplasmic segment spans residues 630 to 637 (LGEATEGR). The helical transmembrane segment at 638–658 (ISAIESLFGASLTGIAYSLFA) threads the bilayer. Residues 659-695 (GQPLTILGSTGPVLVFEKILYKFCRDYQLSYLSLRTS) are Extracellular-facing. A helical membrane pass occupies residues 696–716 (IGLWTSFLCIVLVATDASSLV). Residues 717–725 (CYITRFTEE) are Cytoplasmic-facing. A helical membrane pass occupies residues 726-746 (AFAALICIIFIYEALEKLFDL). Lys-742 is subject to Phosphoserine. Residues 747–817 (GETYAFNMHN…VFLGSACGHH (71 aa)) are Extracellular-facing. Cys-766 and Cys-768 form a disulfide bridge. Residues Pro-771 and Pro-774 each carry the phosphoserine modification. N-linked (GlcNAc...) asparagine glycosylation is present at Asn-776. Residue Ala-780 is modified to Phosphoserine. 2 N-linked (GlcNAc...) asparagine glycosylation sites follow: Asn-786 and Asn-791. Cys-802 and Cys-814 are joined by a disulfide. Residues 818 to 838 (GPYIPDVLFWCVILFFTTFFL) traverse the membrane as a helical segment. The Cytoplasmic segment spans residues 839–861 (SSFLKQFKTKRYFPTKVRSTISD). A helical transmembrane segment spans residues 862–882 (FAVFLTIVIMVTIDYLVGVPS). Residues 883-908 (PKLHVPEKFEPTHPERGWIISPLGDN) are Extracellular-facing. Residues 909–929 (PWWTLLIAAIPALLCTILIFM) traverse the membrane as a helical segment. The Cytoplasmic segment spans residues 930–954 (DQQITAVIINRKEHKLKKGAGYHLD). A helical membrane pass occupies residues 955–975 (LLMVGVMLGVCSVMGLPWFVA). The Extracellular segment spans residues 976–1011 (ATVLSISHVNSLKVESECSAPGEQPKFLGIREQRVT). 3 positions are modified to phosphoserine: Glu-1007, Val-1010, and Phe-1016. Essential for cell membrane localization and transport activity regions lie at residues 1008-1131 (QRVT…KREL) and 1127-1214 (TKRE…ETSL). Residues 1012–1032 (GLMIFILMGLSVFMTSVLKFI) traverse the membrane as a helical segment. Residues 1033 to 1034 (PM) are Cytoplasmic-facing. Residues 1035 to 1055 (PVLYGVFLYMGVSSLKGIQLF) traverse the membrane as a helical segment. Over 1056 to 1092 (DRIKLFGMPAKHQPDLIYLRYVPLWKVHIFTVIQLTC) the chain is Extracellular. Phosphoserine occurs at positions 1073, 1077, 1102, 1105, 1106, 1109, 1111, and 1115. A helical transmembrane segment spans residues 1093 to 1113 (LVLLWVIKVSAAAVVFPMMVL). The Cytoplasmic portion of the chain corresponds to 1114–1214 (ALVFVRKLMD…KKYVDAETSL (101 aa)). The segment at 1134-1136 (LDD) is CA2-binding. A compositionally biased stretch (basic and acidic residues) spans 1144-1162 (KKEDDKKKKEKEEAERMLQ). Residues 1144–1169 (KKEDDKKKKEKEEAERMLQDDDDTVH) form a disordered region. Phosphothreonine is present on Thr-1167. Ser-1176, Ser-1188, Asp-1201, and Ser-1213 each carry phosphoserine. A PDZ-binding motif is present at residues 1211–1214 (ETSL).

This sequence belongs to the anion exchanger (TC 2.A.31) family. In terms of assembly, interacts with CFTR through NHERF1/EBP50. Interacts with USH1C. Forms a complex with ATP6V1B1 and NHERF1/EBP50. Interacts in a pH dependent-manner with CA2/carbonic anhydrase 2. Highly expressed in testis and spleen. Also expressed in retina, colon, small intestine, ovary, thymus, prostate, muscle, heart and kidney. In terms of tissue distribution, expressed in skeletal muscle and heart muscle.

Its subcellular location is the basolateral cell membrane. The protein localises to the apical cell membrane. It is found in the cell projection. The protein resides in the stereocilium. It localises to the cell membrane. It catalyses the reaction hydrogencarbonate(in) + Na(+)(in) = hydrogencarbonate(out) + Na(+)(out). With respect to regulation, transporter activity is regulated by CA2/carbonic anhydrase 2, cAMP and PKA. Insensitive to stilbene derivatives. Inhibited by 5-(N-ethyl-N-isopropyl)-amiloride (EIPA). Electroneutral sodium- and bicarbonate-dependent cotransporter with a Na(+):HCO3(-) 1:1 stoichiometry. Mediates the sodium-dependent bicarbonate transport important for pH recovery after acid load as well as for regulation of steady-state pH in the duodenum and vascular smooth muscle cells. Plays a key role in macrophage acidification, mediating bicarbonate import into the cytoplasm which is crucial for net acid extrusion and maintenance of cytoplasmic pH during phagocytosis. Provides cellular bicarbonate for de novo purine and pyrimidine synthesis and is a key mediator of de novo nucleotide synthesis downstream of mTORC1 signaling in proliferating cells. Its function is as follows. Plays a key role in macrophage acidification, mediating bicarbonate import into the cytoplasm which is crucial for net acid extrusion and maintenance of cytoplasmic pH during phagocytosis. This is Sodium bicarbonate cotransporter 3 (SLC4A7) from Homo sapiens (Human).